A 248-amino-acid polypeptide reads, in one-letter code: Probable transcriptional regulatory protein FTF0655 (248 aa).

This sequence belongs to the TACO1 family.

The protein localises to the cytoplasm. This chain is Probable transcriptional regulatory protein FTF0655, found in Francisella tularensis subsp. tularensis (strain FSC 198).